Here is a 412-residue protein sequence, read N- to C-terminus: Phosphoglycerate kinase 1 (412 aa).

Substrate contacts are provided by residues 28–30 (DFN), 65–68 (HQGR), Arg-122, and Arg-162. Residues Glu-336 and 361–364 (GGHT) each bind ATP.

This sequence belongs to the phosphoglycerate kinase family. Monomer.

Its subcellular location is the cytoplasm. It catalyses the reaction (2R)-3-phosphoglycerate + ATP = (2R)-3-phospho-glyceroyl phosphate + ADP. It functions in the pathway carbohydrate degradation; glycolysis; pyruvate from D-glyceraldehyde 3-phosphate: step 2/5. This chain is Phosphoglycerate kinase 1, found in Methanosarcina acetivorans (strain ATCC 35395 / DSM 2834 / JCM 12185 / C2A).